We begin with the raw amino-acid sequence, 111 residues long: Large ribosomal subunit protein bL20c (111 aa).

The protein belongs to the bacterial ribosomal protein bL20 family.

The protein localises to the plastid. It is found in the chloroplast. Binds directly to 23S ribosomal RNA and is necessary for the in vitro assembly process of the 50S ribosomal subunit. It is not involved in the protein synthesizing functions of that subunit. The sequence is that of Large ribosomal subunit protein bL20c from Ostreococcus tauri.